The following is an 86-amino-acid chain: Small ribosomal subunit protein uS17 (86 aa).

It belongs to the universal ribosomal protein uS17 family. As to quaternary structure, part of the 30S ribosomal subunit.

Functionally, one of the primary rRNA binding proteins, it binds specifically to the 5'-end of 16S ribosomal RNA. The sequence is that of Small ribosomal subunit protein uS17 from Shouchella clausii (strain KSM-K16) (Alkalihalobacillus clausii).